The sequence spans 704 residues: Elongation factor G (704 aa).

Residues 8–290 (EKYRNIGICA…GVVRYLPAPN (283 aa)) form the tr-type G domain. GTP is bound by residues 17 to 24 (AHVDAGKT), 88 to 92 (DTPGH), and 142 to 145 (NKMD).

Belongs to the TRAFAC class translation factor GTPase superfamily. Classic translation factor GTPase family. EF-G/EF-2 subfamily.

It localises to the cytoplasm. Catalyzes the GTP-dependent ribosomal translocation step during translation elongation. During this step, the ribosome changes from the pre-translocational (PRE) to the post-translocational (POST) state as the newly formed A-site-bound peptidyl-tRNA and P-site-bound deacylated tRNA move to the P and E sites, respectively. Catalyzes the coordinated movement of the two tRNA molecules, the mRNA and conformational changes in the ribosome. The polypeptide is Elongation factor G (Francisella tularensis subsp. holarctica (strain LVS)).